A 390-amino-acid chain; its full sequence is D-alanyl-D-alanine carboxypeptidase DacD (390 aa).

The first 23 residues, 1-23, serve as a signal peptide directing secretion; the sequence is MLLKRRLFIAASLFAMHLSPALA. Catalysis depends on Ser65, which acts as the Acyl-ester intermediate. Lys68 functions as the Proton acceptor in the catalytic mechanism. Ser131 is an active-site residue. Lys234 provides a ligand contact to substrate.

This sequence belongs to the peptidase S11 family.

The protein localises to the cell inner membrane. The enzyme catalyses Preferential cleavage: (Ac)2-L-Lys-D-Ala-|-D-Ala. Also transpeptidation of peptidyl-alanyl moieties that are N-acyl substituents of D-alanine.. It participates in cell wall biogenesis; peptidoglycan biosynthesis. Removes C-terminal D-alanyl residues from sugar-peptide cell wall precursors. The chain is D-alanyl-D-alanine carboxypeptidase DacD (dacD) from Salmonella typhimurium (strain LT2 / SGSC1412 / ATCC 700720).